The primary structure comprises 245 residues: Biosynthetic peptidoglycan transglycosylase (245 aa).

Residues 19–39 (IVYAGAVFAAAWLATQLFYFV) form a helical membrane-spanning segment.

The protein belongs to the glycosyltransferase 51 family.

The protein localises to the cell inner membrane. The catalysed reaction is [GlcNAc-(1-&gt;4)-Mur2Ac(oyl-L-Ala-gamma-D-Glu-L-Lys-D-Ala-D-Ala)](n)-di-trans,octa-cis-undecaprenyl diphosphate + beta-D-GlcNAc-(1-&gt;4)-Mur2Ac(oyl-L-Ala-gamma-D-Glu-L-Lys-D-Ala-D-Ala)-di-trans,octa-cis-undecaprenyl diphosphate = [GlcNAc-(1-&gt;4)-Mur2Ac(oyl-L-Ala-gamma-D-Glu-L-Lys-D-Ala-D-Ala)](n+1)-di-trans,octa-cis-undecaprenyl diphosphate + di-trans,octa-cis-undecaprenyl diphosphate + H(+). Its pathway is cell wall biogenesis; peptidoglycan biosynthesis. In terms of biological role, peptidoglycan polymerase that catalyzes glycan chain elongation from lipid-linked precursors. In Burkholderia multivorans (strain ATCC 17616 / 249), this protein is Biosynthetic peptidoglycan transglycosylase.